The sequence spans 257 residues: Type III pantothenate kinase (257 aa).

5–12 lines the ATP pocket; sequence DIGNTNIK. Position 107–110 (107–110) interacts with substrate; the sequence is GSDR. Asp-109 serves as the catalytic Proton acceptor. Position 133 (Thr-133) interacts with ATP.

Belongs to the type III pantothenate kinase family. In terms of assembly, homodimer. It depends on NH4(+) as a cofactor. Requires K(+) as cofactor.

It is found in the cytoplasm. It catalyses the reaction (R)-pantothenate + ATP = (R)-4'-phosphopantothenate + ADP + H(+). It participates in cofactor biosynthesis; coenzyme A biosynthesis; CoA from (R)-pantothenate: step 1/5. Functionally, catalyzes the phosphorylation of pantothenate (Pan), the first step in CoA biosynthesis. The chain is Type III pantothenate kinase from Ehrlichia ruminantium (strain Gardel).